A 251-amino-acid chain; its full sequence is DNA polymerase sliding clamp 2 (251 aa).

Belongs to the PCNA family. As to quaternary structure, heterotrimer. The subunits circularize to form a toroid; DNA passes through its center. Replication factor C (RFC) is required to load the toroid on the DNA.

Functionally, sliding clamp subunit that acts as a moving platform for DNA processing. Responsible for tethering the catalytic subunit of DNA polymerase and other proteins to DNA during high-speed replication. In Aeropyrum pernix (strain ATCC 700893 / DSM 11879 / JCM 9820 / NBRC 100138 / K1), this protein is DNA polymerase sliding clamp 2.